Consider the following 584-residue polypeptide: Protein spire homolog 1 (584 aa).

Residues 1–30 form a disordered region; the sequence is MANTVEADGSNDEGYEAAEEGPEDEEDEKR. The 73-residue stretch at 1 to 73 folds into the KIND domain; the sequence is MANTVEADGS…RALFAETMEL (73 aa). The segment covering 9–28 has biased composition (acidic residues); sequence GSNDEGYEAAEEGPEDEEDE. Positions 71–99 form a coiled coil; the sequence is MELHTFLAKVKSAKENLKKIQEMEKSDES. 2 WH2 domains span residues 147–165 and 211–228; these read PYEM…LRKV and LHER…LRPV. Residues 224 to 238 show a composition bias toward basic and acidic residues; that stretch reads KLRPVSPEEIRRSRL. The tract at residues 224-366 is disordered; it reads KLRPVSPEEI…PTNVRQFLPP (143 aa). Residue serine 229 is modified to Phosphoserine. The span at 242-272 shows a compositional bias: polar residues; it reads TPESTKNLMESSMVNGGLTSQTKENGLSSAE. A phosphoserine mark is found at serine 292, serine 293, and serine 295. A compositionally biased stretch (low complexity) spans 302 to 320; that stretch reads KSTSSSSVSPSFPEEPVLE. The residue at position 337 (threonine 337) is a Phosphothreonine. Over residues 340–356 the composition is skewed to basic and acidic residues; it reads PERRQPPQRRHSIEKET. Polar residues predominate over residues 357-366; sequence PTNVRQFLPP. The interval 384–404 is spir-box; that stretch reads LALTVEEVMHIRQVLVKAELE. A phosphoserine mark is found at serine 506, serine 510, and serine 563.

This sequence belongs to the spire family. As to quaternary structure, interacts with FMN2.

The protein localises to the cytoplasm. It localises to the cytoskeleton. The protein resides in the cytosol. Its subcellular location is the cleavage furrow. It is found in the perinuclear region. The protein localises to the cell membrane. It localises to the cytoplasmic vesicle membrane. Acts as an actin nucleation factor, remains associated with the slow-growing pointed end of the new filament. Involved in intracellular vesicle transport along actin fibers, providing a novel link between actin cytoskeleton dynamics and intracellular transport. Required for asymmetric spindle positioning and asymmetric cell division during meiosis. Required for normal formation of the cleavage furrow and for polar body extrusion during female germ cell meiosis. Also acts in the nucleus: together with FMN2, promotes assembly of nuclear actin filaments in response to DNA damage in order to facilitate movement of chromatin and repair factors after DNA damage. In addition, promotes innate immune signaling downstream of dsRNA sensing. Mechanistically, contributes to IRF3 phosphorylation and activation downstream of MAVS and upstream of TBK1. This is Protein spire homolog 1 (SPIRE1) from Macaca fascicularis (Crab-eating macaque).